A 536-amino-acid polypeptide reads, in one-letter code: Caspase recruitment domain-containing protein 9 (536 aa).

The residue at position 2 (S2) is a Phosphoserine. Zn(2+)-binding residues include D3, C10, and H73. The CARD domain occupies 6–98 (NDDECWSALE…QLYRKVTGKE (93 aa)). Positions 99–116 (PARVFSMIIDASGESGLT) are linker. Coiled coils occupy residues 117–277 (QLLM…HRNS) and 303–420 (SLRK…QLDM). Residue K125 forms a Glycyl lysine isopeptide (Lys-Gly) (interchain with G-Cter in ubiquitin) linkage. At T231 the chain carries Phosphothreonine. Phosphoserine is present on S277. S424, S425, S431, S451, S461, S483, and S498 each carry phosphoserine. The interval 425-451 (SDLEDSSPRNSQELSLPQDLEEDAQLS) is disordered. The disordered stretch occupies residues 472–536 (KHLSQTHDTV…GSDNTDTEGS (65 aa)). Residues 487 to 502 (PPEKERRRLKESFENY) are compositionally biased toward basic and acidic residues. Residues T531 and T533 each carry the phosphothreonine; by CK2 modification.

Monomer. Homodimer; homodimerization is mediated by the CARD domain which forms an extensive interaction with the adjacent linker and coiled-coil regions; leads to an autoinhibited state. Homomultimer; polymerizes following activation, forming a nucleating helical template that seeds BCL10-filament formation via a CARD-CARD interaction. Interacts (via CARD domain) with BCL10 (via CARD domain); interaction takes place following CARD9 activation and polymerization, leading to the formation of a filamentous CBM complex assembly. Component of a CBM complex (CARD9-BCL10, MALT1), composed of CARD9, BCL10 and MALT1. Interacts with RASGRF1. Interacts with NOD2 (via NACHT domain); interaction is direct. Interacts with RIPK2. Interacts with VHL; without leading to protein degradation. Post-translationally, phosphorylated at Thr-231 by PRKCD downstream of C-type lectin receptors activation: phosphorylation promotes interaction with BCL10, followed by activation of NF-kappa-B and MAP kinase p38 pathways. Phosphorylated at Thr-531 and Thr-533 by CK2 following interaction with VHL, leading to inhibit the ability to activate NF-kappa-B. In terms of processing, ubiquitinated at Lys-125 via 'Lys-27'-linked ubiquitin by TRIM62 downstream of C-type lectin receptors activation; leading to CARD9 activation, followed by activation of NF-kappa-B and MAP kinase p38 pathways. Deubiquitinated at Lys-125 by USP15, inhibiting CARD9.

Its subcellular location is the cytoplasm. With respect to regulation, maintained in an autoinhibited state via homodimerization in which the CARD domain forms an extensive interaction with the adjacent linker and coiled-coil regions. Activation downstream of C-type lectin receptors, by phosphorylation by PRKCD and/or ubiquitination by TRIM62, triggers disruption of the CARD domain-coiled coil interface, CARD9 homooligomerization and BCL10 recruitment, followed by activation of NF-kappa-B and MAP kinase p38 pathways. Zinc-binding inhibits activation by stabilizing the CARD ground-state conformation and restricting its capacity to form BCL10-nucleating filaments. Functionally, adapter protein that plays a key role in innate immune response against fungi by forming signaling complexes downstream of C-type lectin receptors. CARD9-mediated signals are essential for antifungal immunity against a subset of fungi from the phylum Ascomycota. Transduces signals in myeloid cells downstream of C-type lectin receptors CLEC7A (dectin-1), CLEC6A (dectin-2) and CLEC4E (Mincle), which detect pathogen-associated molecular pattern metabolites (PAMPs), such as fungal carbohydrates, and trigger CARD9 activation. Upon activation, CARD9 homooligomerizes to form a nucleating helical template that recruits BCL10 via CARD-CARD interaction, thereby promoting polymerization of BCL10 and subsequent recruitment of MALT1: this leads to activation of NF-kappa-B and MAP kinase p38 (MAPK11, MAPK12, MAPK13 and/or MAPK14) pathways which stimulate expression of genes encoding pro-inflammatory cytokines and chemokines. CARD9 signaling in antigen-presenting cells links innate sensing of fungi to the activation of adaptive immunity and provides a cytokine milieu that induces the development and subsequent of interleukin 17-producing T helper (Th17) cells. Also involved in activation of myeloid cells via classical ITAM-associated receptors and TLR: required for TLR-mediated activation of MAPK, while it is not required for TLR-induced activation of NF-kappa-B. CARD9 can also be engaged independently of BCL10: forms a complex with RASGRF1 downstream of C-type lectin receptors, which recruits and activates HRAS, leading to ERK activation and the production of cytokines. Acts as an important regulator of the intestinal commensal fungi (mycobiota) component of the gut microbiota. Plays an essential role in antifungal immunity against dissemination of gut fungi: acts by promoting induction of antifungal IgG antibodies response in CX3CR1(+) macrophages to confer protection against disseminated C.albicans or C.auris infection. Also mediates immunity against other pathogens, such as certain bacteria, viruses and parasites; CARD9 signaling is however redundant with other innate immune responses. In response to L.monocytogenes infection, required for the production of inflammatory cytokines activated by intracellular peptidoglycan: acts by connecting NOD2 recognition of peptidoglycan to downstream activation of MAP kinases (MAPK) without activating NF-kappa-B. The sequence is that of Caspase recruitment domain-containing protein 9 from Rattus norvegicus (Rat).